The following is a 218-amino-acid chain: UPF0711 protein C18orf21 homolog (218 aa).

S126 carries the post-translational modification Phosphoserine. Over residues 130–146 (ASAASKASPKTPKRAAA) the composition is skewed to low complexity. The disordered stretch occupies residues 130-192 (ASAASKASPK…NGSKRKKHFS (63 aa)). T140 is subject to Phosphothreonine. The segment covering 147–156 (GSTNISQSVH) has biased composition (polar residues). The span at 161 to 172 (RSPSSTVRTPTS) shows a compositional bias: low complexity. The segment covering 173 to 183 (GQSTPICSSRN) has biased composition (polar residues).

The protein belongs to the UPF0711 family.

The chain is UPF0711 protein C18orf21 homolog from Rattus norvegicus (Rat).